The sequence spans 531 residues: CTP synthase (531 aa).

The interval 1 to 264 (MPKFVVVTGG…GDFLVERLRL (264 aa)) is amidoligase domain. Residue Ser-13 participates in CTP binding. UTP is bound at residue Ser-13. 14–19 (GLGKGV) serves as a coordination point for ATP. Residue Tyr-54 coordinates L-glutamine. An ATP-binding site is contributed by Asp-71. Mg(2+) is bound by residues Asp-71 and Glu-139. CTP-binding positions include 146–148 (DYE), 185–190 (KTKPLQ), and Lys-221. Residues 185-190 (KTKPLQ) and Lys-221 each bind UTP. Residues 293-531 (CGKYVELPDA…LSAAVEQSRR (239 aa)) enclose the Glutamine amidotransferase type-1 domain. Residue Gly-351 participates in L-glutamine binding. The active-site Nucleophile; for glutamine hydrolysis is Cys-378. Residues 379 to 382 (FGMQ), Glu-402, and Arg-459 contribute to the L-glutamine site. Catalysis depends on residues His-504 and Glu-506.

Belongs to the CTP synthase family. Homotetramer.

It carries out the reaction UTP + L-glutamine + ATP + H2O = CTP + L-glutamate + ADP + phosphate + 2 H(+). The catalysed reaction is L-glutamine + H2O = L-glutamate + NH4(+). The enzyme catalyses UTP + NH4(+) + ATP = CTP + ADP + phosphate + 2 H(+). Its pathway is pyrimidine metabolism; CTP biosynthesis via de novo pathway; CTP from UDP: step 2/2. With respect to regulation, allosterically activated by GTP, when glutamine is the substrate; GTP has no effect on the reaction when ammonia is the substrate. The allosteric effector GTP functions by stabilizing the protein conformation that binds the tetrahedral intermediate(s) formed during glutamine hydrolysis. Inhibited by the product CTP, via allosteric rather than competitive inhibition. Functionally, catalyzes the ATP-dependent amination of UTP to CTP with either L-glutamine or ammonia as the source of nitrogen. Regulates intracellular CTP levels through interactions with the four ribonucleotide triphosphates. The sequence is that of CTP synthase from Pyrobaculum calidifontis (strain DSM 21063 / JCM 11548 / VA1).